The sequence spans 629 residues: (-)-alpha pinene synthase 1, chloroplastic (629 aa).

The transit peptide at 1–48 (MSPVSVISLPSDLCLPTSFIDRSGRELNPLHITIPNVAMRRQGKLMTR) directs the protein to the chloroplast. Residues D380, D384, and D532 each coordinate Mg(2+). Positions 380 to 384 (DDMYD) match the DDXXD motif motif.

It belongs to the terpene synthase family. Tpsd subfamily. Mg(2+) serves as cofactor. Requires Mn(2+) as cofactor.

The protein localises to the plastid. It is found in the chloroplast. It catalyses the reaction (2E)-geranyl diphosphate = (1S,5S)-alpha-pinene + diphosphate. The enzyme catalyses (2E)-geranyl diphosphate = (1S,5S)-beta-pinene + diphosphate. It functions in the pathway terpene metabolism; oleoresin biosynthesis. It participates in secondary metabolite biosynthesis; terpenoid biosynthesis. Monoterpene synthase (TPS) involved in the biosynthesis of monoterpene natural products included in conifer oleoresin secretions and volatile emissions; these compounds contribute to biotic and abiotic stress defense against herbivores and pathogens. Catalyzes the conversion of (2E)-geranyl diphosphate (GPP) to (-)-alpha-pinene and, to a lower extent, to (-)-beta-pinene. This chain is (-)-alpha pinene synthase 1, chloroplastic, found in Pinus contorta (Shore pine).